Consider the following 502-residue polypeptide: Protein GIS3 (502 aa).

The protein localises to the cytoplasm. Its subcellular location is the nucleus. The polypeptide is Protein GIS3 (GIS3) (Saccharomyces cerevisiae (strain ATCC 204508 / S288c) (Baker's yeast)).